The primary structure comprises 218 residues: N-(5'-phosphoribosyl)anthranilate isomerase (218 aa).

Belongs to the TrpF family.

It catalyses the reaction N-(5-phospho-beta-D-ribosyl)anthranilate = 1-(2-carboxyphenylamino)-1-deoxy-D-ribulose 5-phosphate. Its pathway is amino-acid biosynthesis; L-tryptophan biosynthesis; L-tryptophan from chorismate: step 3/5. The sequence is that of N-(5'-phosphoribosyl)anthranilate isomerase from Desulfatibacillum aliphaticivorans.